An 863-amino-acid polypeptide reads, in one-letter code: Scm-like with four MBT domains protein 1 (863 aa).

4 MBT repeats span residues phenylalanine 20 to proline 120, serine 128 to proline 232, alanine 242 to proline 346, and phenylalanine 354 to proline 451. The disordered stretch occupies residues lysine 638–proline 773. The segment covering lysine 660–serine 679 has biased composition (basic residues). A compositionally biased stretch (polar residues) spans serine 680–proline 691. Acidic residues-rich tracts occupy residues glycine 696 to leucine 710 and glutamine 718 to glutamate 727. The span at serine 734–proline 744 shows a compositional bias: low complexity. Serine 764 and serine 772 each carry phosphoserine. The SAM domain occupies tryptophan 793–phenylalanine 861.

In terms of assembly, interacts with MYOD1. Component of the SLC (SFMBT1-LSD1-CoREST) corepressor complex, which also contains KDM1A/LSD1 and RCOR1/CoREST. Interacts with KDM1A/LSD1 and RCOR1/CoREST. Interacts with MYOD1. Interacts with L3MBTL3. Highly expressed in the testis, low expression is detected in brain, kidney, heart and lung. Highly expressed in germ cells, where it associates with the synaptic regions of meiotic chromosomes in pachytene stage spermatocytes.

Its subcellular location is the nucleus. In terms of biological role, histone-binding protein, which is part of various corepressor complexes. Mediates the recruitment of corepressor complexes to target genes, followed by chromatin compaction and repression of transcription. Plays a role during myogenesis: required for the maintenance of undifferentiated states of myogenic progenitor cells via interaction with MYOD1. Interaction with MYOD1 leads to the recruitment of associated corepressors and silencing of MYOD1 target genes. Part of the SLC complex in germ cells, where it may play a role during spermatogenesis. The polypeptide is Scm-like with four MBT domains protein 1 (Sfmbt1) (Mus musculus (Mouse)).